Here is a 1233-residue protein sequence, read N- to C-terminus: NACHT, LRR and PYD domains-containing protein 1b allele 1 (1233 aa).

The interval 1–22 is disordered; sequence MEESPPKQKSNTKVAQHEGQQD. Positions 126 to 435 constitute an NACHT domain; the sequence is QLVIIEGAAG…EFFAAISCIL (310 aa). An ATP-binding site is contributed by 132–139; that stretch reads GAAGIGKS. LRR repeat units follow at residues 627-647 and 684-704; these read NLEGLDLSGNSLRYSVVQSLC and SLTELYLQLNDLGDDGVRMLC. Residues 850–983 are ZU5; it reads FWGPIGPVAT…GYTVLKNPSF (134 aa). One can recognise an FIIND domain in the interval 850–1133; it reads FWGPIGPVAT…LRPALPRIAQ (284 aa). Positions 984–1133 are UPA; that stretch reads SPMGVVLRII…LRPALPRIAQ (150 aa). Residues 1143 to 1226 form the CARD domain; sequence HFMDQHREQL…HLVMDLLEKS (84 aa).

Belongs to the NLRP family. In terms of assembly, interacts with DPP9; leading to inhibit activation of the inflammasome. DPP9 acts via formation of a ternary complex, composed of a DPP9 homodimer, one full-length Nlrp1b protein, and one cleaved C-terminus of Nlrp1b (NACHT, LRR and PYD domains-containing protein 1b, C-terminus). Interacts with DPP8; leading to inhibit activation of the inflammasome, probably via formation of a ternary complex with DPP8. Interacts (via LRR repeats) with BCL2 and BCL2L1 (via the loop between motifs BH4 and BH3). Interacts with NOD2; this interaction may increase IL1B release. Interacts with EIF2AK2/PKR; this interaction requires EIF2AK2 activity, is accompanied by EIF2AK2 autophosphorylation and promotes inflammasome assembly in response to B.anthracis lethal toxin. Interacts with MEFV; this interaction targets Nlrp1b to degradation by autophagy, hence preventing excessive IL1B- and IL18-mediated inflammation. Interacts with the C-terminal part of Nlrp1b (NACHT, LRR and PYD domains-containing protein 1b, C-terminus) in absence of pathogens and other damage-associated signals. As to quaternary structure, interacts with the N-terminal part of Nlrp1b (NACHT, LRR and PYD domains-containing protein 1b, N-terminus) in absence of pathogens and other damage-associated signals. Homomultimer; forms the Nlrp1b inflammasome polymeric complex, a filament composed of homopolymers of this form in response to pathogens and other damage-associated signals. The Nlrp1b inflammasome polymeric complex directly recruits pro-caspase-1 (proCASP1) independently of PYCARD/ASC. Interacts (via CARD domain) with CASP1 (via CARD domain); leading to CASP1 activation. In terms of processing, autocatalytically cleaved. Autocatalytic cleavage in FIIND region occurs constitutively, prior to activation signals, and is required for inflammasome activity (IL1B release), possibly by facilitating CASP1 binding. Both N- and C-terminal parts remain associated non-covalently. Ubiquitinated by UBR2, a component of the N-end rule pathway in response to pathogens and other damage-associated signals, leading to its degradation by the proteasome and subsequent release of the cleaved C-terminal part of the protein (NACHT, LRR and PYD domains-containing protein 1b, C-terminus), which polymerizes and forms the Nlrp1b inflammasome. Post-translationally, (Microbial infection) Cleavage by B.anthracis lethal toxin (LT) endopeptidase promotes ubiquitination and degradation of the N-terminal part, releasing the cleaved C-terminal part of the protein (NACHT, LRR and PYD domains-containing protein 1b, C-terminus), which polymerizes and forms the Nlrp1b inflammasome. In terms of processing, (Microbial infection) Ubiquitinated by S.flexneri IpaH7.8, leading to its degradation by the proteasome and subsequent release of the cleaved C-terminal part of the protein (NACHT, LRR and PYD domains-containing protein 1b, C-terminus), which polymerizes and forms the Nlrp1b inflammasome. In terms of tissue distribution, widely expressed, including in macrophages.

It is found in the cytoplasm. The protein localises to the cytosol. It localises to the membrane. The protein resides in the inflammasome. Activated by cleavage by B.anthracis lethal toxin (LT) endopeptidase: cleavage by LT promotes ubiquitination and degradation of the N-terminal part, releasing the cleaved C-terminal part of the protein (NACHT, LRR and PYD domains-containing protein 1b, C-terminus), which polymerizes and forms the Nlrp1b inflammasome. Activated by S.flexneri IpaH7.8, an E3 ubiquitin ligase that mediates ubiquitination and degradation of the N-terminal part, releasing the cleaved C-terminal part of the protein, which polymerizes and forms the Nlrp1b inflammasome. Nlrp1b inflammasome is inhibited by DPP8 and DPP9, which sequester the C-terminal fragment of Nlrp1b (NACHT, LRR and PYD domains-containing protein 1b, C-terminus) in a ternary complex, thereby preventing Nlrp1b oligomerization and activation. Nlrp1b inflammasome is activated by Val-boroPro (Talabostat, PT-100), an inhibitor of dipeptidyl peptidases DPP8 and DPP9. Val-boroPro relieves inhibition of DPP8 and/or DPP9 by promoting disruption of the ternary complex, releasing its C-terminal part from autoinhibition. Activated by metabolic inhibitors, such as 2-deoxy-D-glucose and sodium azide, by nutrient deprivation and hypoxia, possibly due to a decrease in cytosolic ATP. Also activated by Toxoplasma gondii. Not activated by muramyl dipeptide, nor by full-length bacterial peptidoglycan. Contrary to its human ortholog, not activated by positive-strand RNA virus such as Semliki Forrest virus or long dsRNA. Acts as the sensor component of the Nlrp1b inflammasome, which mediates inflammasome activation in response to various pathogen-associated signals, leading to subsequent pyroptosis. Inflammasomes are supramolecular complexes that assemble in the cytosol in response to pathogens and other damage-associated signals and play critical roles in innate immunity and inflammation. Acts as a recognition receptor (PRR): recognizes specific pathogens and other damage-associated signals, such as B.anthracis lethal toxin (LT) or Val-boroPro inhibitor, and mediates the formation of the inflammasome polymeric complex. In response to pathogen-associated signals, the N-terminal part of Nlrp1b is degraded by the proteasome, releasing the cleaved C-terminal part of the protein (NACHT, LRR and PYD domains-containing protein 1b, C-terminus), which polymerizes to initiate the formation of the inflammasome complex: the inflammasome directly recruits pro-caspase-1 (proCASP1) independently of PYCARD/ASC and promotes caspase-1 (CASP1) activation, which subsequently cleaves and activates inflammatory cytokines IL1B and IL18 and gasdermin-D (GSDMD), leading to pyroptosis. In the absence of GSDMD expression, the Nlrp1b inflammasome is able to recruit and activate CASP8, leading to activation of gasdermin-E (GSDME). Activation of Nlrp1b inflammasome is also required for HMGB1 secretion; the active cytokines and HMGB1 stimulate inflammatory responses. Primary mediator of macrophage susceptibility to B.anthracis LT: in response to B.anthracis infection, macrophages and dendritic cells release IL1B and undergo pyroptosis. This early inflammatory response to the toxin increases resistance to infection by B.anthracis spores. Functionally, constitutes the precursor of the Nlrp1b inflammasome, which mediates autoproteolytic processing within the FIIND domain to generate the N-terminal and C-terminal parts, which are associated non-covalently in absence of pathogens and other damage-associated signals. Its function is as follows. Regulatory part that prevents formation of the Nlrp1b inflammasome: in absence of pathogens and other damage-associated signals, interacts with the C-terminal part of Nlrp1b (NACHT, LRR and PYD domains-containing protein 1b, C-terminus), preventing activation of the Nlrp1b inflammasome. In response to pathogen-associated signals, this part is ubiquitinated by the N-end rule pathway and degraded by the proteasome, releasing the cleaved C-terminal part of the protein, which polymerizes and forms the Nlrp1b inflammasome. In terms of biological role, constitutes the active part of the Nlrp1b inflammasome. In absence of pathogens and other damage-associated signals, interacts with the N-terminal part of Nlrp1b (NACHT, LRR and PYD domains-containing protein 1b, N-terminus), preventing activation of the Nlrp1b inflammasome. In response to pathogen-associated signals, the N-terminal part of Nlrp1b is degraded by the proteasome, releasing this form, which polymerizes to form the Nlrp1b inflammasome complex: the Nlrp1b inflammasome complex then directly recruits pro-caspase-1 (proCASP1) and promotes caspase-1 (CASP1) activation, leading to gasdermin-D (GSDMD) cleavage and subsequent pyroptosis. In Mus musculus (Mouse), this protein is NACHT, LRR and PYD domains-containing protein 1b allele 1.